The sequence spans 243 residues: Tryptophan synthase alpha chain (243 aa).

Catalysis depends on proton acceptor residues Glu31 and Asp42.

Belongs to the TrpA family. As to quaternary structure, tetramer of two alpha and two beta chains.

The enzyme catalyses (1S,2R)-1-C-(indol-3-yl)glycerol 3-phosphate + L-serine = D-glyceraldehyde 3-phosphate + L-tryptophan + H2O. It functions in the pathway amino-acid biosynthesis; L-tryptophan biosynthesis; L-tryptophan from chorismate: step 5/5. Functionally, the alpha subunit is responsible for the aldol cleavage of indoleglycerol phosphate to indole and glyceraldehyde 3-phosphate. The protein is Tryptophan synthase alpha chain of Staphylococcus haemolyticus (strain JCSC1435).